The sequence spans 962 residues: Leucine--tRNA ligase (962 aa).

The short motif at 40-51 is the 'HIGH' region element; it reads PYPSGAGLHVGH. The interval 548-570 is disordered; sequence SRKLSGQHDEPNSNVTPSAVEGS. Positions 737 to 741 match the 'KMSKS' region motif; that stretch reads KMSKS. Lys-740 contacts ATP.

The protein belongs to the class-I aminoacyl-tRNA synthetase family.

Its subcellular location is the cytoplasm. It catalyses the reaction tRNA(Leu) + L-leucine + ATP = L-leucyl-tRNA(Leu) + AMP + diphosphate. The polypeptide is Leucine--tRNA ligase (Christiangramia forsetii (strain DSM 17595 / CGMCC 1.15422 / KT0803) (Gramella forsetii)).